Reading from the N-terminus, the 308-residue chain is MAEITASMVKQLRETTGAGMMDCKSALTETGGDMEAAIDWLRTKGLAKAAKKAGRVAAEGLIGVVANGTAGAIVEVNSETDFVARNEQFQKMVSDIASAALSVEGDFDKLVASTYPGSSKSVQDYVTEMVGTIGENMSVRRAGCISVSDGAVAAYVHSQVVPGLGKIGVLVGLESKGDKTKLLELGRQIAMHIAATNPLATRKEEMDPALVERERNVLIAEAKESGRPDNIIEKMVEGRIRKFYEEVVLLSQAFVINPDDTVEKAVKAAEADVGAPITVVGFLRFALGEGIEKEESDFAAEVAAAARG.

Residues 80 to 83 (TDFV) form an involved in Mg(2+) ion dislocation from EF-Tu region.

The protein belongs to the EF-Ts family.

The protein resides in the cytoplasm. In terms of biological role, associates with the EF-Tu.GDP complex and induces the exchange of GDP to GTP. It remains bound to the aminoacyl-tRNA.EF-Tu.GTP complex up to the GTP hydrolysis stage on the ribosome. The polypeptide is Elongation factor Ts (Parvibaculum lavamentivorans (strain DS-1 / DSM 13023 / NCIMB 13966)).